Consider the following 90-residue polypeptide: Antitoxin epsilon 2 (90 aa).

It belongs to the epsilon antitoxin family. As to quaternary structure, in the presence of the zeta toxin, forms an inactive PezA(2)PezT(2) heterotetramer.

Antitoxin component of a type II toxin-antitoxin (TA) system. Neutralizes the toxic effect of zeta toxin. Part of a postsegregational killing (PSK) system involved in the killing of plasmid-free cells. Continuous synthesis of the epsilon antitoxin is required to counteract the zeta toxin. In Enterococcus faecalis (Streptococcus faecalis), this protein is Antitoxin epsilon 2.